Reading from the N-terminus, the 282-residue chain is tRNA uridine(34) hydroxylase (282 aa).

In terms of domain architecture, Rhodanese spans 128 to 222 (EGRPVVMLDT…YFEEVGGDHY (95 aa)). Residue Cys-182 is the Cysteine persulfide intermediate of the active site.

The protein belongs to the TrhO family.

The catalysed reaction is uridine(34) in tRNA + AH2 + O2 = 5-hydroxyuridine(34) in tRNA + A + H2O. Its function is as follows. Catalyzes oxygen-dependent 5-hydroxyuridine (ho5U) modification at position 34 in tRNAs. The protein is tRNA uridine(34) hydroxylase of Cupriavidus pinatubonensis (strain JMP 134 / LMG 1197) (Cupriavidus necator (strain JMP 134)).